Reading from the N-terminus, the 123-residue chain is Protein Wnt-7 (123 aa).

S1 carries the O-palmitoleoyl serine; by PORCN lipid modification. Cysteines 89 and 104 form a disulfide. Residue N90 is glycosylated (N-linked (GlcNAc...) asparagine).

The protein belongs to the Wnt family. Palmitoleoylation is required for efficient binding to frizzled receptors. Depalmitoleoylation leads to Wnt signaling pathway inhibition.

It localises to the secreted. The protein resides in the extracellular space. Its subcellular location is the extracellular matrix. Functionally, ligand for members of the frizzled family of seven transmembrane receptors. Probable developmental protein. May be a signaling molecule which affects the development of discrete regions of tissues. Is likely to signal over only few cell diameters. The chain is Protein Wnt-7 (WNT-7) from Evasterias troschelii (Mottled sea star).